The primary structure comprises 154 residues: Endoribonuclease YbeY (154 aa).

Positions 113, 117, and 123 each coordinate Zn(2+).

This sequence belongs to the endoribonuclease YbeY family. It depends on Zn(2+) as a cofactor.

Its subcellular location is the cytoplasm. Its function is as follows. Single strand-specific metallo-endoribonuclease involved in late-stage 70S ribosome quality control and in maturation of the 3' terminus of the 16S rRNA. In Vibrio vulnificus (strain YJ016), this protein is Endoribonuclease YbeY.